Reading from the N-terminus, the 421-residue chain is Serine hydroxymethyltransferase (421 aa).

Residues leucine 120 and 124 to 126 contribute to the (6S)-5,6,7,8-tetrahydrofolate site; that span reads GHL. Lysine 229 carries the N6-(pyridoxal phosphate)lysine modification. Residue 354 to 356 participates in (6S)-5,6,7,8-tetrahydrofolate binding; the sequence is SPF.

It belongs to the SHMT family. As to quaternary structure, homodimer. It depends on pyridoxal 5'-phosphate as a cofactor.

The protein localises to the cytoplasm. It catalyses the reaction (6R)-5,10-methylene-5,6,7,8-tetrahydrofolate + glycine + H2O = (6S)-5,6,7,8-tetrahydrofolate + L-serine. It participates in one-carbon metabolism; tetrahydrofolate interconversion. The protein operates within amino-acid biosynthesis; glycine biosynthesis; glycine from L-serine: step 1/1. Its function is as follows. Catalyzes the reversible interconversion of serine and glycine with tetrahydrofolate (THF) serving as the one-carbon carrier. This reaction serves as the major source of one-carbon groups required for the biosynthesis of purines, thymidylate, methionine, and other important biomolecules. Also exhibits THF-independent aldolase activity toward beta-hydroxyamino acids, producing glycine and aldehydes, via a retro-aldol mechanism. This Opitutus terrae (strain DSM 11246 / JCM 15787 / PB90-1) protein is Serine hydroxymethyltransferase.